Here is a 131-residue protein sequence, read N- to C-terminus: Interleukin-13 (131 aa).

A signal peptide spans 1 to 18 (MALWLTLVIALTCFGGLA). Residues N39, N50, N58, and N74 are each glycosylated (N-linked (GlcNAc...) asparagine). Cystine bridges form between C49–C78 and C66–C92.

The protein belongs to the IL-4/IL-13 family. In terms of assembly, interacts with IL13RA2.

The protein resides in the secreted. Cytokine that plays important roles in allergic inflammation and immune response to parasite infection. Synergizes with IL2 in regulating interferon-gamma synthesis. Stimulates B-cell proliferation, and activation of eosinophils, basophils, and mast cells. Plays an important role in controlling IL33 activity by modulating the production of transmembrane and soluble forms of interleukin-1 receptor-like 1/IL1RL1. Displays the capacity to antagonize Th1-driven proinflammatory immune response and downregulates synthesis of many proinflammatory cytokines including IL1, IL6, IL10, IL12 and TNF-alpha through a mechanism that partially involves suppression of NF-kappa-B. Also functions on nonhematopoietic cells, including endothelial cells where it induces vascular cell adhesion protein 1/VCAM1, which is important in the recruitment of eosinophils. Exerts its biological effects through its receptors which comprises the IL4R chain and the IL13RA1 chain, to activate JAK1 and TYK2, leading to the activation of STAT6. Aside from IL13RA1, another receptor IL13RA2 acts as a high affinity decoy for IL13 and mediates internalization and depletion of extracellular IL13. This is Interleukin-13 (IL13) from Sus scrofa (Pig).